Here is a 165-residue protein sequence, read N- to C-terminus: Xanthine-guanine phosphoribosyltransferase (165 aa).

5-phospho-alpha-D-ribose 1-diphosphate-binding positions include 41–42 (RG) and 98–106 (DDLTDTGKT). Residue D99 participates in Mg(2+) binding. Residues D102 and I145 each coordinate guanine. 2 residues coordinate xanthine: D102 and I145. GMP is bound by residues 102–106 (DTGKT) and 144–145 (WI).

This sequence belongs to the purine/pyrimidine phosphoribosyltransferase family. XGPT subfamily. Homotetramer. It depends on Mg(2+) as a cofactor.

The protein resides in the cell inner membrane. The catalysed reaction is GMP + diphosphate = guanine + 5-phospho-alpha-D-ribose 1-diphosphate. It carries out the reaction XMP + diphosphate = xanthine + 5-phospho-alpha-D-ribose 1-diphosphate. It catalyses the reaction IMP + diphosphate = hypoxanthine + 5-phospho-alpha-D-ribose 1-diphosphate. Its pathway is purine metabolism; GMP biosynthesis via salvage pathway; GMP from guanine: step 1/1. The protein operates within purine metabolism; XMP biosynthesis via salvage pathway; XMP from xanthine: step 1/1. In terms of biological role, purine salvage pathway enzyme that catalyzes the transfer of the ribosyl-5-phosphate group from 5-phospho-alpha-D-ribose 1-diphosphate (PRPP) to the N9 position of the 6-oxopurines guanine and xanthine to form the corresponding ribonucleotides GMP (guanosine 5'-monophosphate) and XMP (xanthosine 5'-monophosphate), with the release of PPi. To a lesser extent, also acts on hypoxanthine. This is Xanthine-guanine phosphoribosyltransferase from Sinorhizobium medicae (strain WSM419) (Ensifer medicae).